Reading from the N-terminus, the 268-residue chain is Fatty acid elongase sre1 (268 aa).

The next 7 membrane-spanning stretches (helical) occupy residues valine 31–methionine 51, phenylalanine 62–methionine 82, isoleucine 110–isoleucine 130, proline 137–leucine 157, tryptophan 161–tyrosine 181, isoleucine 198–valine 218, and alanine 227–glycine 247.

This sequence belongs to the ELO family.

Its subcellular location is the membrane. The catalysed reaction is a very-long-chain acyl-CoA + malonyl-CoA + H(+) = a very-long-chain 3-oxoacyl-CoA + CO2 + CoA. In terms of biological role, could be implicated in synthesis of very long chain fatty acids. The sequence is that of Fatty acid elongase sre1 (sre1) from Dictyostelium discoideum (Social amoeba).